We begin with the raw amino-acid sequence, 285 residues long: HTH-type transcriptional activator AmpR (285 aa).

Residues 5–62 form the HTH lysR-type domain; sequence LPLNALRAFEASARHLSFTRAALELCVTQAAVSQQVRILEDRLNRVLFKRLPRGLEMT. Residues 22–41 constitute a DNA-binding region (H-T-H motif); that stretch reads FTRAALELCVTQAAVSQQVR.

It belongs to the LysR transcriptional regulatory family.

Its subcellular location is the cytoplasm. In terms of biological role, this protein is a positive regulator of gene expression of beta-lactamase (AmpC). The sequence is that of HTH-type transcriptional activator AmpR (ampR) from Citrobacter koseri (Citrobacter diversus).